A 308-amino-acid polypeptide reads, in one-letter code: NADH-cytochrome b5 reductase 1 (308 aa).

Residues 29 to 49 (VASSPAFLVAAAAIVIAAAFY) traverse the membrane as a helical segment. In terms of domain architecture, FAD-binding FR-type spans 64 to 167 (SIWKEFPLQK…KGPKGNFKYT (104 aa)). Residues 147 to 162 (ASLK…GPKG) and 173 to 205 (HLGM…NITL) each bind FAD.

Belongs to the flavoprotein pyridine nucleotide cytochrome reductase family. Monomer. Component of the 2-(3-amino-3-carboxypropyl)histidine synthase complex composed of DPH1, DPH2, DPH3 and a NADH-dependent reductase, predominantly MCR1.1. FAD is required as a cofactor.

It localises to the mitochondrion outer membrane. It catalyses the reaction 2 Fe(III)-[cytochrome b5] + NADH = 2 Fe(II)-[cytochrome b5] + NAD(+) + H(+). The catalysed reaction is 2 Fe(3+)-[Dph3] + NADH = 2 Fe(2+)-[Dph3] + NAD(+) + H(+). It functions in the pathway protein modification; peptidyl-diphthamide biosynthesis. In terms of biological role, NADH-dependent reductase for DPH3 and cytochrome b5. Required for the first step of diphthamide biosynthesis, a post-translational modification of histidine which occurs in elongation factor 2. DPH1 and DPH2 transfer a 3-amino-3-carboxypropyl (ACP) group from S-adenosyl-L-methionine (SAM) to a histidine residue, the reaction is assisted by a reduction system comprising DPH3 and a NADH-dependent reductase, predominantly MCR1.1. By reducing DPH3, also involved in the formation of the tRNA wobble base modification mcm5s 2U (5-methoxycarbonylmethyl-2-thiouridine), mediated by the elongator complex. The cytochrome b5/NADH cytochrome b5 reductase electron transfer system supports the catalytic activity of several sterol biosynthetic enzymes. The polypeptide is NADH-cytochrome b5 reductase 1 (MCR1.1) (Laccaria bicolor (strain S238N-H82 / ATCC MYA-4686) (Bicoloured deceiver)).